The sequence spans 437 residues: MGALVAIVGRPNVGKSTLFNRLTQSRQAIVAEEAGTTRDRQYGRVHWNGREFSIVDTGGWVVNSEDVFEEEINKQVYIAVEEADVVLFVADNQTGVTSLDEQVAEILRRSKKPVIVVANKVDNTEDHYSASEFYSFGLGDPYCIAAVSGSGTGDLLDRVMELLPAENGQSDLDETLPRIAIVGRPNAGKSSLLNAFIGEDRHIVTDIAGTTRDSIYTKYNKFGLNFYLVDTAGIRKRGKVNEDLEYYSVIRSIRAIENSDVCVLMLDATRGVESQDLNIFQIIQRNSKGLVVCINKWDLVEDKSQAVIKTFENAIRQRFAPFTDFPLLFISAMTKQRIFKVLETVNQVYAHRSTRIPTHKLNEVMLPIIEATPPPATKGKYIKIKYVMQLPTAVPSFAFFANLPQWVKEPYKRFLENQIRAHWDFCGTPINIFIREK.

EngA-type G domains are found at residues alanine 3–asparagine 167 and proline 177–serine 353. Residues glycine 9–serine 16, aspartate 56–tryptophan 60, asparagine 119–aspartate 122, glycine 183–serine 190, aspartate 230–isoleucine 234, and asparagine 295–aspartate 298 contribute to the GTP site. Positions threonine 354–lysine 437 constitute a KH-like domain.

This sequence belongs to the TRAFAC class TrmE-Era-EngA-EngB-Septin-like GTPase superfamily. EngA (Der) GTPase family. Associates with the 50S ribosomal subunit.

Functionally, GTPase that plays an essential role in the late steps of ribosome biogenesis. The sequence is that of GTPase Der from Porphyromonas gingivalis (strain ATCC BAA-308 / W83).